A 250-amino-acid chain; its full sequence is 3-deoxy-manno-octulosonate cytidylyltransferase (250 aa).

It belongs to the KdsB family.

The protein localises to the cytoplasm. It catalyses the reaction 3-deoxy-alpha-D-manno-oct-2-ulosonate + CTP = CMP-3-deoxy-beta-D-manno-octulosonate + diphosphate. The protein operates within nucleotide-sugar biosynthesis; CMP-3-deoxy-D-manno-octulosonate biosynthesis; CMP-3-deoxy-D-manno-octulosonate from 3-deoxy-D-manno-octulosonate and CTP: step 1/1. It participates in bacterial outer membrane biogenesis; lipopolysaccharide biosynthesis. In terms of biological role, activates KDO (a required 8-carbon sugar) for incorporation into bacterial lipopolysaccharide in Gram-negative bacteria. This is 3-deoxy-manno-octulosonate cytidylyltransferase from Syntrophotalea carbinolica (strain DSM 2380 / NBRC 103641 / GraBd1) (Pelobacter carbinolicus).